Here is a 306-residue protein sequence, read N- to C-terminus: Non-specific ribonucleoside hydrolase RihC (306 aa).

Residue His235 is part of the active site.

The protein belongs to the IUNH family. RihC subfamily.

Its function is as follows. Hydrolyzes both purine and pyrimidine ribonucleosides with a broad-substrate specificity. This Salmonella schwarzengrund (strain CVM19633) protein is Non-specific ribonucleoside hydrolase RihC.